The chain runs to 109 residues: Resistin (109 aa).

The first 18 residues, 1 to 18 (MKALSFLFIPVLGLLVCG), serve as a signal peptide directing secretion. 5 disulfides stabilise this stretch: Cys51-Cys104, Cys63-Cys103, Cys72-Cys89, Cys74-Cys91, and Cys78-Cys93.

Belongs to the resistin/FIZZ family. As to quaternary structure, homodimer; disulfide-linked.

Its subcellular location is the secreted. In terms of biological role, hormone that seems to suppress insulin ability to stimulate glucose uptake into adipose cells. Potentially links obesity to diabetes. The polypeptide is Resistin (RETN) (Bos taurus (Bovine)).